A 2591-amino-acid polypeptide reads, in one-letter code: Eukaryotic translation initiation factor 2-alpha kinase PK4 (2591 aa).

Residues 1–16 lie on the Cytoplasmic side of the membrane; it reads MYNKGINICLNEDNKC. Residues 17 to 37 traverse the membrane as a helical segment; that stretch reads IILLHIIFNKCIVSFVASHIL. The Lumenal portion of the chain corresponds to 38 to 1488; sequence VEGKICFLNR…EFSSQKHKKS (1451 aa). Residues 1028-1048 are disordered; sequence KKKRNSKKGENRNKKRKTQKR. Residues 1489–1509 form a helical membrane-spanning segment; the sequence is WYWNIFYAITLVIVIPFIFIY. The Cytoplasmic portion of the chain corresponds to 1510–2591; sequence RLFKKQTNNK…NIINGNEVDH (1082 aa). The segment at 1781 to 1840 is disordered; the sequence is NLNSADEENKSPYAKKYSDEKKNRSKSSKYIENTQSNNNDNTNGNMNVGNHINNDKMNNK. The span at 1813–1832 shows a compositional bias: low complexity; sequence NTQSNNNDNTNGNMNVGNHI. ATP-binding positions include 1880–1888 and Lys1905; that span reads IGQGGFGSV. 2 disordered regions span residues 2123–2157 and 2183–2212; these read DNDESNGSGHSKKNDNDERKSLNNQNGIYNTGGDI and IKNTQGTSINGTINRNTISDETGTQGTNNN. Residues 2134 to 2143 show a composition bias toward basic and acidic residues; that stretch reads KKNDNDERKS. The Protein kinase domain occupies 2181–2532; it reads MTIKNTQGTS…KIKVLLDPHL (352 aa). The active-site Proton acceptor is the Asp2369. Thr2436 bears the Phosphothreonine; by autocatalysis mark. Polar residues predominate over residues 2558-2574; sequence STNPNGDIKENVNQNNL. The disordered stretch occupies residues 2558–2591; that stretch reads STNPNGDIKENVNQNNLVDDKGNNNIINGNEVDH. Low complexity predominate over residues 2580-2591; that stretch reads NNNIINGNEVDH.

The protein belongs to the protein kinase superfamily. Ser/Thr protein kinase family. GCN2 subfamily. May form oligomers in response to stress; oligomerization may result in catalytic activity. Interacts with BIP; the interaction is disrupted in response to stress.

It is found in the endoplasmic reticulum membrane. The enzyme catalyses L-seryl-[protein] + ATP = O-phospho-L-seryl-[protein] + ADP + H(+). The catalysed reaction is L-threonyl-[protein] + ATP = O-phospho-L-threonyl-[protein] + ADP + H(+). Its activity is regulated as follows. Dissociation from BIP and oligomerization, may results autophosphorylation and kinase activity induction. During the asexual blood stage, phosphorylates translation factor eIF2alpha in late schizonts resulting in protein translation inhibition. Plays a role in trophozoite differentiation into schizonts. The protein is Eukaryotic translation initiation factor 2-alpha kinase PK4 of Plasmodium berghei (strain Anka).